The primary structure comprises 395 residues: Imidazolonepropionase (395 aa).

Fe(3+) is bound by residues H63 and H65. Positions 63 and 65 each coordinate Zn(2+). 4-imidazolone-5-propanoate-binding residues include R72, Y135, and H168. Y135 contributes to the N-formimidoyl-L-glutamate binding site. Residue H233 participates in Fe(3+) binding. H233 is a binding site for Zn(2+). Q236 lines the 4-imidazolone-5-propanoate pocket. D308 is a binding site for Fe(3+). Residue D308 participates in Zn(2+) binding. N-formimidoyl-L-glutamate is bound by residues N310 and G312. T313 provides a ligand contact to 4-imidazolone-5-propanoate.

Belongs to the metallo-dependent hydrolases superfamily. HutI family. Requires Zn(2+) as cofactor. The cofactor is Fe(3+).

It is found in the cytoplasm. The catalysed reaction is 4-imidazolone-5-propanoate + H2O = N-formimidoyl-L-glutamate. It functions in the pathway amino-acid degradation; L-histidine degradation into L-glutamate; N-formimidoyl-L-glutamate from L-histidine: step 3/3. Functionally, catalyzes the hydrolytic cleavage of the carbon-nitrogen bond in imidazolone-5-propanoate to yield N-formimidoyl-L-glutamate. It is the third step in the universal histidine degradation pathway. The sequence is that of Imidazolonepropionase from Cereibacter sphaeroides (strain KD131 / KCTC 12085) (Rhodobacter sphaeroides).